A 654-amino-acid chain; its full sequence is Heat shock 70 kDa protein 2 (654 aa).

Over residues 612 to 646 the composition is skewed to gly residues; sequence AGGEGGAPGAGFPGAGGPGGFPGAGAGGAHSGGDD. Residues 612–654 form a disordered region; sequence AGGEGGAPGAGFPGAGGPGGFPGAGAGGAHSGGDDGPTVEEVD.

It belongs to the heat shock protein 70 family.

In Paracoccidioides lutzii (strain ATCC MYA-826 / Pb01) (Paracoccidioides brasiliensis), this protein is Heat shock 70 kDa protein 2 (HSP70-2).